Consider the following 654-residue polypeptide: NADH-ubiquinone oxidoreductase chain 5 (654 aa).

Helical transmembrane passes span 1–21 (MYLA…FLGR), 30–50 (LITC…FYEV), 76–96 (FIYD…SALV), 113–133 (FFAY…GDNY), 135–155 (VMFI…NFWF), 178–198 (FSIG…TTVF), 200–220 (LAPF…LVAA), 241–261 (TPVS…YLLL), 274–294 (LILI…TGLL), 301–320 (VIAY…CGLS), 324–346 (VALF…AGSV), 365–385 (LLPF…ALPF), 406–426 (SGNL…MYSI), 451–471 (PLIM…FGYV), 510–530 (FLPL…YWIF), and 612–632 (TYAM…FFIG).

The protein belongs to the complex I subunit 5 family.

Its subcellular location is the mitochondrion inner membrane. It carries out the reaction a ubiquinone + NADH + 5 H(+)(in) = a ubiquinol + NAD(+) + 4 H(+)(out). Core subunit of the mitochondrial membrane respiratory chain NADH dehydrogenase (Complex I) that is believed to belong to the minimal assembly required for catalysis. Complex I functions in the transfer of electrons from NADH to the respiratory chain. The immediate electron acceptor for the enzyme is believed to be ubiquinone. In Rhizopus stolonifer (Rhizopus nigricans), this protein is NADH-ubiquinone oxidoreductase chain 5 (ND5).